Consider the following 253-residue polypeptide: 3-deoxy-manno-octulosonate cytidylyltransferase (253 aa).

It belongs to the KdsB family.

The protein resides in the cytoplasm. It catalyses the reaction 3-deoxy-alpha-D-manno-oct-2-ulosonate + CTP = CMP-3-deoxy-beta-D-manno-octulosonate + diphosphate. The protein operates within nucleotide-sugar biosynthesis; CMP-3-deoxy-D-manno-octulosonate biosynthesis; CMP-3-deoxy-D-manno-octulosonate from 3-deoxy-D-manno-octulosonate and CTP: step 1/1. Its pathway is bacterial outer membrane biogenesis; lipopolysaccharide biosynthesis. In terms of biological role, activates KDO (a required 8-carbon sugar) for incorporation into bacterial lipopolysaccharide in Gram-negative bacteria. This is 3-deoxy-manno-octulosonate cytidylyltransferase from Acinetobacter baumannii (strain ATCC 17978 / DSM 105126 / CIP 53.77 / LMG 1025 / NCDC KC755 / 5377).